The following is a 318-amino-acid chain: Protein RecA (318 aa).

53-60 (GPESSGKT) serves as a coordination point for ATP.

It belongs to the RecA family.

It is found in the cytoplasm. Functionally, can catalyze the hydrolysis of ATP in the presence of single-stranded DNA, the ATP-dependent uptake of single-stranded DNA by duplex DNA, and the ATP-dependent hybridization of homologous single-stranded DNAs. It interacts with LexA causing its activation and leading to its autocatalytic cleavage. The chain is Protein RecA from Bacteroides fragilis (strain YCH46).